A 327-amino-acid polypeptide reads, in one-letter code: Putative hydroxymethylpyrimidine/phosphomethylpyrimidine kinase C18B5.05c (327 aa).

4-amino-5-hydroxymethyl-2-methylpyrimidine is bound at residue Gln54.

This sequence belongs to the ThiD family.

It is found in the cytoplasm. It localises to the nucleus. It catalyses the reaction 4-amino-5-hydroxymethyl-2-methylpyrimidine + ATP = 4-amino-2-methyl-5-(phosphooxymethyl)pyrimidine + ADP + H(+). The catalysed reaction is 4-amino-2-methyl-5-(phosphooxymethyl)pyrimidine + ATP = 4-amino-2-methyl-5-(diphosphooxymethyl)pyrimidine + ADP. The protein operates within cofactor biosynthesis; thiamine diphosphate biosynthesis; 4-amino-2-methyl-5-diphosphomethylpyrimidine from 5-amino-1-(5-phospho-D-ribosyl)imidazole: step 2/3. It functions in the pathway cofactor biosynthesis; thiamine diphosphate biosynthesis; 4-amino-2-methyl-5-diphosphomethylpyrimidine from 5-amino-1-(5-phospho-D-ribosyl)imidazole: step 3/3. Catalyzes the phosphorylation of hydroxymethylpyrimidine phosphate (HMP-P) to HMP-PP, and of HMP to HMP-P. The chain is Putative hydroxymethylpyrimidine/phosphomethylpyrimidine kinase C18B5.05c from Schizosaccharomyces pombe (strain 972 / ATCC 24843) (Fission yeast).